The chain runs to 513 residues: Gluconokinase (513 aa).

ATP-binding positions include K16, T261, G300, and 412-416 (GFARS).

The protein belongs to the FGGY kinase family.

The catalysed reaction is D-gluconate + ATP = 6-phospho-D-gluconate + ADP + H(+). It functions in the pathway carbohydrate acid metabolism; D-gluconate degradation. Its activity is regulated as follows. Catabolite repression by gluconate. The polypeptide is Gluconokinase (gntK) (Bacillus licheniformis).